Consider the following 450-residue polypeptide: Hydrolase ffsE (450 aa).

The active-site Nucleophile is serine 266.

It belongs to the AB hydrolase superfamily. FUS2 hydrolase family. In terms of assembly, homodimer.

It functions in the pathway mycotoxin biosynthesis. In terms of biological role, hydrolase; part of the gene cluster that mediates the biosynthesis of the cytotoxic leucine-containing cytochalasans, including aspochalasin C, aspochalasin E, TMC-169, flavichalasine F, aspergillin PZ, aspochalasin M and flavichalasine G. The first step in the pathway is catalyzed by the hybrid PKS-NRPS ffsA that utilizes 8 units of malonyl-CoA to iteratively assemble the octaketide chain before addition of L-leucine by the C-terminal NRPS modules. Because ffsA lacks a designated enoylreductase (ER) domain, the required activity is provided the enoyl reductase fssC. The methyltransferase (MT) domain of ffsA catalyzes the alpha-methylation at C10 and C14 using S-adenosyl-L-methionine as the methyl-donating cosubstrate. Reduction by the hydrolyase ffsE, followed by dehydration and intra-molecular Diels-Alder cyclization by the Diels-Alderase ffsF then yield the required isoindolone-fused macrocycle. A number of oxidative steps catalyzed by the tailoring cytochrome P450 monooxygenase ffsD, the FAD-linked oxidoreductase ffsJ and the short-chain dehydrogenase/reductase ffsI, are further required to afford the final products. This is Hydrolase ffsE from Aspergillus flavipes.